Here is a 387-residue protein sequence, read N- to C-terminus: 3-ketoacyl-CoA thiolase (387 aa).

Cys-91 (acyl-thioester intermediate) is an active-site residue. Catalysis depends on proton acceptor residues His-343 and Cys-373.

This sequence belongs to the thiolase-like superfamily. Thiolase family. As to quaternary structure, heterotetramer of two alpha chains (FadB) and two beta chains (FadA).

It is found in the cytoplasm. It catalyses the reaction an acyl-CoA + acetyl-CoA = a 3-oxoacyl-CoA + CoA. The protein operates within lipid metabolism; fatty acid beta-oxidation. Functionally, catalyzes the final step of fatty acid oxidation in which acetyl-CoA is released and the CoA ester of a fatty acid two carbons shorter is formed. The sequence is that of 3-ketoacyl-CoA thiolase from Aeromonas hydrophila subsp. hydrophila (strain ATCC 7966 / DSM 30187 / BCRC 13018 / CCUG 14551 / JCM 1027 / KCTC 2358 / NCIMB 9240 / NCTC 8049).